Here is a 256-residue protein sequence, read N- to C-terminus: uncharacterized protein (256 aa).

The signal sequence occupies residues 1 to 24 (MIKRVNKLVLGISFLFLIISIFAG). Residue Cys25 is the site of N-palmitoyl cysteine attachment. Residue Cys25 is the site of S-diacylglycerol cysteine attachment.

Belongs to the staphylococcal tandem lipoprotein family.

Its subcellular location is the cell membrane. This is an uncharacterized protein from Staphylococcus aureus (strain Mu50 / ATCC 700699).